A 129-amino-acid chain; its full sequence is ATP synthase epsilon chain (129 aa).

This sequence belongs to the ATPase epsilon chain family. As to quaternary structure, F-type ATPases have 2 components, CF(1) - the catalytic core - and CF(0) - the membrane proton channel. CF(1) has five subunits: alpha(3), beta(3), gamma(1), delta(1), epsilon(1). CF(0) has three main subunits: a, b and c.

The protein resides in the cell inner membrane. Its function is as follows. Produces ATP from ADP in the presence of a proton gradient across the membrane. In Campylobacter jejuni subsp. jejuni serotype O:6 (strain 81116 / NCTC 11828), this protein is ATP synthase epsilon chain.